The sequence spans 373 residues: UDP-N-acetylenolpyruvoylglucosamine reductase (373 aa).

The FAD-binding PCMH-type domain maps to 30 to 203 (LACMADSVVT…SRVGFRLHTD (174 aa)). Arg180 is an active-site residue. Ser258 functions as the Proton donor in the catalytic mechanism. Glu356 is a catalytic residue.

Belongs to the MurB family. The cofactor is FAD.

Its subcellular location is the cytoplasm. It catalyses the reaction UDP-N-acetyl-alpha-D-muramate + NADP(+) = UDP-N-acetyl-3-O-(1-carboxyvinyl)-alpha-D-glucosamine + NADPH + H(+). The protein operates within cell wall biogenesis; peptidoglycan biosynthesis. In terms of biological role, cell wall formation. This is UDP-N-acetylenolpyruvoylglucosamine reductase from Psychrobacter cryohalolentis (strain ATCC BAA-1226 / DSM 17306 / VKM B-2378 / K5).